Consider the following 195-residue polypeptide: MTVGLFGGSFNPPHVAHLVVAEVVRDQFGLDEVWWIPNATPPHKPNDELAAVQHRLAMTERTVEGNPAFRVCGVEVERDGVSYTVETLRVLQDQHPDTDFALILGSDSLDHFADWHRPDEIAERVPFIVYKRPGAIESVADPRFVNDVRYAAAPVMEISGTEVRARRRAGRSIRYLVPEAVRAYIDTHDLYRPTD.

It belongs to the NadD family.

It catalyses the reaction nicotinate beta-D-ribonucleotide + ATP + H(+) = deamido-NAD(+) + diphosphate. The protein operates within cofactor biosynthesis; NAD(+) biosynthesis; deamido-NAD(+) from nicotinate D-ribonucleotide: step 1/1. In terms of biological role, catalyzes the reversible adenylation of nicotinate mononucleotide (NaMN) to nicotinic acid adenine dinucleotide (NaAD). The sequence is that of Probable nicotinate-nucleotide adenylyltransferase from Salinibacter ruber (strain DSM 13855 / M31).